The following is a 136-amino-acid chain: Small ribosomal subunit protein uS8c (136 aa).

Belongs to the universal ribosomal protein uS8 family. As to quaternary structure, part of the 30S ribosomal subunit.

The protein localises to the plastid. It is found in the chloroplast. Functionally, one of the primary rRNA binding proteins, it binds directly to 16S rRNA central domain where it helps coordinate assembly of the platform of the 30S subunit. This chain is Small ribosomal subunit protein uS8c (rps8), found in Hordeum vulgare (Barley).